We begin with the raw amino-acid sequence, 345 residues long: S-adenosylmethionine:tRNA ribosyltransferase-isomerase (345 aa).

It belongs to the QueA family. Monomer.

It localises to the cytoplasm. The catalysed reaction is 7-aminomethyl-7-carbaguanosine(34) in tRNA + S-adenosyl-L-methionine = epoxyqueuosine(34) in tRNA + adenine + L-methionine + 2 H(+). It participates in tRNA modification; tRNA-queuosine biosynthesis. In terms of biological role, transfers and isomerizes the ribose moiety from AdoMet to the 7-aminomethyl group of 7-deazaguanine (preQ1-tRNA) to give epoxyqueuosine (oQ-tRNA). The polypeptide is S-adenosylmethionine:tRNA ribosyltransferase-isomerase (Acinetobacter baumannii (strain AB0057)).